Reading from the N-terminus, the 251-residue chain is uncharacterized protein (251 aa).

The Response regulatory domain occupies 3–118 (KVVICDDERI…QLEHILDILV (116 aa)). D55 carries the 4-aspartylphosphate modification. Residues 152–249 (NQILSQIKQH…HMSPSDYNKL (98 aa)) enclose the HTH araC/xylS-type domain. DNA-binding regions (H-T-H motif) lie at residues 169–190 (LDLINPIVVSESYAMRTFKEHV) and 216–239 (HYEIAEKVGFSEYKMFCYHFKKYL).

Post-translationally, phosphorylated by SE_0166.

The protein resides in the cytoplasm. Probable member of the two-component regulatory system SE_0166/SE_0165. This is an uncharacterized protein from Staphylococcus epidermidis (strain ATCC 12228 / FDA PCI 1200).